The primary structure comprises 437 residues: Sulfite reductase, dissimilatory-type subunit alpha (437 aa).

Residues cysteine 177, cysteine 183, cysteine 221, cysteine 225, cysteine 284, cysteine 303, cysteine 306, and cysteine 309 each contribute to the [4Fe-4S] cluster site. The region spanning 294–322 (SKLSIDNKECVRCMHCINTMPRALHIGDE) is the 4Fe-4S ferredoxin-type domain.

In terms of assembly, heterohexamer of two alpha, two beta and two gamma subunits.

Part of the complex that catalyzes the reduction of sulfite to sulfide. The alpha and beta subunits may have arisen by gene duplication. They both bind 2 iron-sulfur clusters, but the alpha subunit seems to be catalytically inactive, due to substitutions along the putative substrate access channel, and because it binds sirohydrochlorin (the dematallated form of siroheme) instead of siroheme. In Nitratidesulfovibrio vulgaris (strain ATCC 29579 / DSM 644 / CCUG 34227 / NCIMB 8303 / VKM B-1760 / Hildenborough) (Desulfovibrio vulgaris), this protein is Sulfite reductase, dissimilatory-type subunit alpha (dsvA).